The primary structure comprises 421 residues: UPF0415 protein C7orf25 (421 aa).

It belongs to the UPF0415 family.

In Homo sapiens (Human), this protein is UPF0415 protein C7orf25 (C7orf25).